The following is a 24-amino-acid chain: Brevinin-1E (24 aa).

Cysteines 18 and 24 form a disulfide.

As to expression, expressed by the skin glands.

The protein localises to the secreted. Functionally, antimicrobial peptide. Stimulates insulin release by BRIN-BD11 cells in vitro. This Pelophylax saharicus (Sahara frog) protein is Brevinin-1E.